A 598-amino-acid polypeptide reads, in one-letter code: Terpenoid synthase 1 (598 aa).

Positions 362, 366, 494, and 502 each coordinate Mg(2+). The DDXXD motif motif lies at 362–366 (DDTCD).

This sequence belongs to the terpene synthase family. Tpsa subfamily. Requires Mg(2+) as cofactor. The cofactor is Mn(2+). As to expression, expressed exclusively in siliques.

The protein resides in the cytoplasm. It functions in the pathway secondary metabolite biosynthesis; terpenoid biosynthesis. This chain is Terpenoid synthase 1 (TPS01), found in Arabidopsis thaliana (Mouse-ear cress).